The following is a 452-amino-acid chain: Mitochondrial distribution and morphology protein 34 (452 aa).

In terms of domain architecture, SMP-LTD spans 1-196; sequence MSFRVKGWSD…LPSIIYKMSR (196 aa).

It belongs to the MDM34 family. In terms of assembly, component of the ER-mitochondria encounter structure (ERMES) or MDM complex, composed of mmm1, mdm10, mdm12 and mdm34.

The protein resides in the mitochondrion outer membrane. Component of the ERMES/MDM complex, which serves as a molecular tether to connect the endoplasmic reticulum (ER) and mitochondria. Components of this complex are involved in the control of mitochondrial shape and protein biogenesis, and function in nonvesicular lipid trafficking between the ER and mitochondria. Mdm34 is required for the interaction of the ER-resident membrane protein mmm1 and the outer mitochondrial membrane-resident beta-barrel protein mdm10. The polypeptide is Mitochondrial distribution and morphology protein 34 (Schizosaccharomyces pombe (strain 972 / ATCC 24843) (Fission yeast)).